A 119-amino-acid chain; its full sequence is Circadian clock oscillator protein KaiB (119 aa).

The protein belongs to the KaiB family. In terms of assembly, the KaiABC complex composition changes during the circadian cycle to control KaiC phosphorylation. Complexes KaiC(6), KaiA(2-4):KaiC(6), KaiB(6):KaiC(6) and KaiC(6):KaiB(6):KaiA(12) are among the most important forms, many form cooperatively. Undergoes a major conformational rearrangment; in the free state forms homotetramers as a dimer of dimers. When bound to the CI domain of KaiC switches to a monomeric thioredoxin-fold (KaiB(fs)). KaiB(fs) binds CikA, leading it to dephosphorylate phospho-RpaA.

In terms of biological role, key component of the KaiABC oscillator complex, which constitutes the main circadian regulator in cyanobacteria. Complex composition changes during the circadian cycle to control KaiC phosphorylation. KaiA stimulates KaiC autophosphorylation, while KaiB sequesters KaiA, leading to KaiC autodephosphorylation. Phospho-Ser-431 KaiC accumulation triggers binding of KaiB to form the KaiB(6):KaiC(6) complex, leading to changes in output regulators CikA and SasA. KaiB switches to a thioredoxin-like fold (KaiB(fs)) when bound to KaiC. KaiB(6):KaiC(6) formation exposes a site for KaiA binding that sequesters KaiA from KaiC, making the KaiC(6):KaiB(6):KaiA(12) complex that results in KaiC autodephosphorylation. Functionally, a metamorphic protein which reversibly switches between an inactive tetrameric fold and a rare, thioredoxin-like monomeric fold (KaiB(fs)). KaiB(fs) binds phospho-KaiC, KaiA and CikA. KaiA and CikA compete for binding to KaiB(fs), and KaiB(fs) and SasA compete for binding to KaiC, thus the clock oscillator and output signal pathway are tightly coupled. This chain is Circadian clock oscillator protein KaiB, found in Synechococcus sp. (strain CC9311).